A 129-amino-acid chain; its full sequence is MAKLSTEELLDAFAELTLLELSEFVKAFEEKFEVTAAAPVAVAAVGGAAPAAADAAEEQSEFDVILESAGDKKIGVIKVVREIVSGLGLKEAKDLVDGAPKPLLEKVAKEAADDAKAKLEAAGATVTVK.

It belongs to the bacterial ribosomal protein bL12 family. As to quaternary structure, homodimer. Part of the ribosomal stalk of the 50S ribosomal subunit. Forms a multimeric L10(L12)X complex, where L10 forms an elongated spine to which 2 to 4 L12 dimers bind in a sequential fashion. Binds GTP-bound translation factors.

Its function is as follows. Forms part of the ribosomal stalk which helps the ribosome interact with GTP-bound translation factors. Is thus essential for accurate translation. The polypeptide is Large ribosomal subunit protein bL12 (Mycobacteroides abscessus (strain ATCC 19977 / DSM 44196 / CCUG 20993 / CIP 104536 / JCM 13569 / NCTC 13031 / TMC 1543 / L948) (Mycobacterium abscessus)).